The primary structure comprises 805 residues: DNA gyrase subunit B (805 aa).

A Toprim domain is found at 431–546 (CEMYIVEGDS…NECVYIAQPP (116 aa)). Mg(2+)-binding residues include Glu-437, Asp-511, and Asp-513.

The protein belongs to the type II topoisomerase GyrB family. As to quaternary structure, heterotetramer, composed of two GyrA and two GyrB chains. In the heterotetramer, GyrA contains the active site tyrosine that forms a transient covalent intermediate with DNA, while GyrB binds cofactors and catalyzes ATP hydrolysis. Requires Mg(2+) as cofactor. Mn(2+) serves as cofactor. It depends on Ca(2+) as a cofactor.

The protein resides in the cytoplasm. The catalysed reaction is ATP-dependent breakage, passage and rejoining of double-stranded DNA.. Its function is as follows. A type II topoisomerase that negatively supercoils closed circular double-stranded (ds) DNA in an ATP-dependent manner to modulate DNA topology and maintain chromosomes in an underwound state. Negative supercoiling favors strand separation, and DNA replication, transcription, recombination and repair, all of which involve strand separation. Also able to catalyze the interconversion of other topological isomers of dsDNA rings, including catenanes and knotted rings. Type II topoisomerases break and join 2 DNA strands simultaneously in an ATP-dependent manner. The sequence is that of DNA gyrase subunit B from Chlamydia pneumoniae (Chlamydophila pneumoniae).